Reading from the N-terminus, the 200-residue chain is NADH-ubiquinone oxidoreductase 21.3 kDa subunit (200 aa).

A run of 3 helical transmembrane segments spans residues 16–36, 48–68, and 105–125; these read IKSGVSGALFSGGAGLLMASL, MHVFTHGGGTIISFTLAGGIY, and FPVILGFGAMAGSVVGAFAFS.

Complex I is composed of about 40 different subunits.

It localises to the mitochondrion inner membrane. The catalysed reaction is a ubiquinone + NADH + 5 H(+)(in) = a ubiquinol + NAD(+) + 4 H(+)(out). Transfer of electrons from NADH to the respiratory chain. The immediate electron acceptor for the enzyme is believed to be ubiquinone. The polypeptide is NADH-ubiquinone oxidoreductase 21.3 kDa subunit (Neurospora crassa (strain ATCC 24698 / 74-OR23-1A / CBS 708.71 / DSM 1257 / FGSC 987)).